Here is a 213-residue protein sequence, read N- to C-terminus: AN1-type zinc finger protein 5 (213 aa).

The segment at 8-42 adopts an A20-type zinc-finger fold; sequence TPGPMLCSTGCGFYGNPRTNGMCSVCYKEHLQRQQ. Zn(2+) is bound by residues C14, C18, C30, and C33. The segment at 39 to 149 is disordered; that stretch reads QRQQNSGRMS…EEKAPELPKP (111 aa). The segment covering 40–66 has biased composition (polar residues); that stretch reads RQQNSGRMSPMGTASGSNSPTSDSASV. A phosphoserine mark is found at S48 and S58. Residues 120–138 show a composition bias toward low complexity; that stretch reads SEPVVTQPSPSVSQPSSSQ. Positions 139-148 are enriched in basic and acidic residues; that stretch reads SEEKAPELPK. Residues 148–194 form an AN1-type zinc finger; it reads KPKKNRCFMCRKKVGLTGFDCRCGNLFCGLHRYSDKHNCPYDYKAEA. Residues C154, C157, C168, C170, C175, H178, H184, and C186 each coordinate Zn(2+). N6-acetyllysine is present on K209.

As to quaternary structure, homooligomer and/or heterooligomer. Interacts (via A20-type domain) with IKBKG and RIPK1 and with TRAF6 (via AN1-type domain). Interacts with ubiquitin and polyubiquitinated proteins. Identified in a heterotrimeric complex with ubiquitin and SQSTM1, where ZFAND5 and SQSTM1 both interact with the same ubiquitin molecule.

The protein resides in the cytoplasm. Involved in protein degradation via the ubiquitin-proteasome system. May act by anchoring ubiquitinated proteins to the proteasome. Plays a role in ubiquitin-mediated protein degradation during muscle atrophy. Plays a role in the regulation of NF-kappa-B activation and apoptosis. Inhibits NF-kappa-B activation triggered by overexpression of RIPK1 and TRAF6 but not of RELA. Also inhibits tumor necrosis factor (TNF), IL-1 and TLR4-induced NF-kappa-B activation in a dose-dependent manner. Overexpression sensitizes cells to TNF-induced apoptosis. Is a potent inhibitory factor for osteoclast differentiation. The polypeptide is AN1-type zinc finger protein 5 (Zfand5) (Rattus norvegicus (Rat)).